Consider the following 57-residue polypeptide: High-potential iron-sulfur protein (57 aa).

[4Fe-4S] cluster contacts are provided by cysteine 21, cysteine 24, cysteine 33, and cysteine 46.

The protein belongs to the high-potential iron-sulfur protein (HiPIP) family. As to quaternary structure, homodimer.

Functionally, specific class of high-redox-potential 4Fe-4S ferredoxins. Functions in anaerobic electron transport in most purple and in some other photosynthetic bacteria and in at least one genus (Paracoccus) of halophilic, denitrifying bacteria. The sequence is that of High-potential iron-sulfur protein (hip) from Rhodopila globiformis (Rhodopseudomonas globiformis).